The chain runs to 960 residues: Ran GTPase-activating protein 2 (960 aa).

LRR repeat units lie at residues 69–92 (HLNLEVLDFRGNTLSVLAGKLIAE), 132–156 (GCRLTTLDLSDNAFGAGLSTSLYNF), 162–185 (LYSLENLILNNNGLGLAGKTVGKA), 227–254 (LGTLEEIRLPQNGIRDDGIIALAEAFRM), and 313–340 (RDCLKKVVLSGNNITSDVIDEIGACFNS). The tract at residues 370–408 (NIDFGRRGDDELLSSDEEEEQGAEDASMEEDAFNTSRET) is disordered. A compositionally biased stretch (acidic residues) spans 380–401 (ELLSSDEEEEQGAEDASMEEDA). 4 LRR repeats span residues 475–498 (ASSMKALELRGNTLGIAAGNVIAK), 538–561 (GCKIKELDLSDNAFGPIGADALKD), 568–595 (SFSLEVLKLNNNGLGIGGKQIAKSLTEC), and 663–685 (NRNLRYLWLEDNTVLPKGAKALA). The disordered stretch occupies residues 777-819 (PENVNVGDEDDDLGSLDGDQEEYNSKSSDSEDADLDDDDEDDD). Acidic residues-rich tracts occupy residues 783-798 (GDEDDDLGSLDGDQEE) and 806-819 (SEDADLDDDDEDDD).

It localises to the nucleus. Its function is as follows. GTPase system comprising ran-1, ran-2 and ran-3 is essential in nucleocytoplasmic trafficking. Ran-2 is a GTPase activator for the nuclear RAS-related regulatory protein Ran, converting it to the putatively inactive GDP-bound state. Required for correct chromosome alignment and segregation on the metaphase plate. This is Ran GTPase-activating protein 2 (ran-2) from Caenorhabditis elegans.